Consider the following 133-residue polypeptide: MPSPINRTKIVKKKTTKFNRFQSDLFKRVGASWRKPRGIDNRVRRRFSGSRAMPSIGFGSAKATKDVCPDGFKRFVIRNVQELEVLLMQNRRYAAVIFHGVSAKSRKAIVERAAELNIKVTTPNARLRSEERE.

Belongs to the eukaryotic ribosomal protein eL32 family.

In Dictyostelium discoideum (Social amoeba), this protein is Large ribosomal subunit protein eL32 (rpl32).